The sequence spans 249 residues: Isoamyl acetate-hydrolyzing esterase 1 homolog (249 aa).

The Nucleophile role is filled by Ser24. Residue Lys63 is modified to N6-succinyllysine. The active-site Proton donor is the Asp197. The active-site Proton acceptor is His200.

This sequence belongs to the 'GDSL' lipolytic enzyme family. IAH1 subfamily.

Its function is as follows. Probable lipase. This chain is Isoamyl acetate-hydrolyzing esterase 1 homolog (Iah1), found in Mus musculus (Mouse).